The following is a 115-amino-acid chain: NADH-ubiquinone oxidoreductase chain 3 (115 aa).

Helical transmembrane passes span 4-24 (FIVM…AFWL), 55-75 (FFLV…LLPL), and 86-106 (ITML…AYEW).

Belongs to the complex I subunit 3 family. As to quaternary structure, core subunit of respiratory chain NADH dehydrogenase (Complex I) which is composed of 45 different subunits. Interacts with TMEM186. Interacts with TMEM242.

The protein localises to the mitochondrion inner membrane. The enzyme catalyses a ubiquinone + NADH + 5 H(+)(in) = a ubiquinol + NAD(+) + 4 H(+)(out). Its function is as follows. Core subunit of the mitochondrial membrane respiratory chain NADH dehydrogenase (Complex I) which catalyzes electron transfer from NADH through the respiratory chain, using ubiquinone as an electron acceptor. Essential for the catalytic activity of complex I. This Reithrodontomys fulvescens (Fulvous harvest mouse) protein is NADH-ubiquinone oxidoreductase chain 3.